The chain runs to 357 residues: 3-isopropylmalate dehydrogenase (357 aa).

76–89 (GPKWDNEPSHNRPE) contacts NAD(+). 4 residues coordinate substrate: Arg-96, Arg-106, Arg-135, and Asp-223. 3 residues coordinate Mg(2+): Asp-223, Asp-247, and Asp-251. 281-293 (GSAPDIAGQDKAN) is an NAD(+) binding site.

The protein belongs to the isocitrate and isopropylmalate dehydrogenases family. LeuB type 1 subfamily. In terms of assembly, homodimer. Mg(2+) serves as cofactor. Mn(2+) is required as a cofactor.

It is found in the cytoplasm. The catalysed reaction is (2R,3S)-3-isopropylmalate + NAD(+) = 4-methyl-2-oxopentanoate + CO2 + NADH. It participates in amino-acid biosynthesis; L-leucine biosynthesis; L-leucine from 3-methyl-2-oxobutanoate: step 3/4. Its function is as follows. Catalyzes the oxidation of 3-carboxy-2-hydroxy-4-methylpentanoate (3-isopropylmalate) to 3-carboxy-4-methyl-2-oxopentanoate. The product decarboxylates to 4-methyl-2 oxopentanoate. This chain is 3-isopropylmalate dehydrogenase, found in Helicobacter hepaticus (strain ATCC 51449 / 3B1).